The sequence spans 1723 residues: Probable outer membrane protein pmp20 (1723 aa).

Residues 1 to 21 form the signal peptide; that stretch reads MKWLPATAVFAAVLPALTAFG. Disordered regions lie at residues 78–100 and 139–161; these read VTPD…SGAT and LSSS…SASA. Low complexity-rich tracts occupy residues 85 to 100 and 140 to 161; these read SSSN…SGAT and SSSS…SASA. One can recognise an Autotransporter domain in the interval 1434–1723; that stretch reads EDPAFNNFWA…MANGGIRFVF (290 aa).

The protein belongs to the PMP outer membrane protein family.

The protein resides in the secreted. It is found in the cell wall. Its subcellular location is the cell outer membrane. This is Probable outer membrane protein pmp20 (pmp20) from Chlamydia pneumoniae (Chlamydophila pneumoniae).